Here is a 342-residue protein sequence, read N- to C-terminus: 29 kDa ribonucleoprotein, chloroplastic (342 aa).

The transit peptide at 1–65 (MSASASSLSA…PAEYPSRFVR (65 aa)) directs the protein to the chloroplast. An RRM 1 domain is found at 99–177 (LKLFVGNLSF…RPLRVNAGPP (79 aa)). Ser107 and Ser204 each carry phosphoserine. The segment at 167–255 (GRPLRVNAGP…GSGSGSGSGS (89 aa)) is disordered. The linker (Gly-rich) stretch occupies residues 178–256 (PPKREESFSR…SGSGSGSGSG (79 aa)). Composition is skewed to gly residues over residues 190 to 237 (RSGG…GYGG) and 245 to 255 (SGSGSGSGSGS). The 79-residue stretch at 257-335 (NRLYVGNLSW…RQIRVSEAEA (79 aa)) folds into the RRM 2 domain.

It localises to the plastid. It is found in the chloroplast. Its function is as follows. Stabilizes specific chloroplast mRNAs. Required for normal chloroplast development under cold stress conditions by stabilizing transcripts of numerous mRNAs under these conditions. The polypeptide is 29 kDa ribonucleoprotein, chloroplastic (Arabidopsis thaliana (Mouse-ear cress)).